The primary structure comprises 110 residues: B3 domain-containing protein LOC_Os02g10420 (110 aa).

A DNA-binding region (TF-B3) is located at residues 1-104 (MSAMLNENVP…VLSVTVHKAD (104 aa)).

The protein resides in the nucleus. This Oryza sativa subsp. japonica (Rice) protein is B3 domain-containing protein LOC_Os02g10420.